The sequence spans 186 residues: Tumor necrosis factor, alpha-induced protein 8-like protein 2 A (186 aa).

Belongs to the TNFAIP8 family. TNFAIP8L2 subfamily.

Acts as a negative regulator of innate and adaptive immunity by maintaining immune homeostasis. Negative regulator of Toll-like receptor and T-cell receptor function. Prevents hyperresponsiveness of the immune system and maintains immune homeostasis. Inhibits jun/ap1 and NF-kappa-B activation. Promotes Fas-induced apoptosis. The polypeptide is Tumor necrosis factor, alpha-induced protein 8-like protein 2 A (tnfaip8l2a) (Danio rerio (Zebrafish)).